A 386-amino-acid polypeptide reads, in one-letter code: Flap endonuclease 1 (386 aa).

Residues methionine 1–arginine 104 are N-domain. Aspartate 34 contributes to the Mg(2+) binding site. The DNA site is built by arginine 47 and arginine 70. Positions 86, 158, 160, 179, and 181 each coordinate Mg(2+). The segment at glutamate 122–tyrosine 253 is I-domain. DNA is bound at residue glutamate 158. DNA is bound by residues glycine 231 and aspartate 233. Aspartate 233 serves as a coordination point for Mg(2+). The segment at threonine 336 to phenylalanine 344 is interaction with PCNA. The tract at residues valine 354–lysine 386 is disordered.

Belongs to the XPG/RAD2 endonuclease family. FEN1 subfamily. As to quaternary structure, interacts with PCNA. Three molecules of FEN1 bind to one PCNA trimer with each molecule binding to one PCNA monomer. PCNA stimulates the nuclease activity without altering cleavage specificity. The cofactor is Mg(2+). In terms of processing, phosphorylated. Phosphorylation upon DNA damage induces relocalization to the nuclear plasma.

It localises to the nucleus. Its subcellular location is the nucleolus. The protein localises to the nucleoplasm. The protein resides in the mitochondrion. Functionally, structure-specific nuclease with 5'-flap endonuclease and 5'-3' exonuclease activities involved in DNA replication and repair. During DNA replication, cleaves the 5'-overhanging flap structure that is generated by displacement synthesis when DNA polymerase encounters the 5'-end of a downstream Okazaki fragment. It enters the flap from the 5'-end and then tracks to cleave the flap base, leaving a nick for ligation. Also involved in the long patch base excision repair (LP-BER) pathway, by cleaving within the apurinic/apyrimidinic (AP) site-terminated flap. Acts as a genome stabilization factor that prevents flaps from equilibrating into structures that lead to duplications and deletions. Also possesses 5'-3' exonuclease activity on nicked or gapped double-stranded DNA, and exhibits RNase H activity. Also involved in replication and repair of rDNA and in repairing mitochondrial DNA. In Drosophila pseudoobscura pseudoobscura (Fruit fly), this protein is Flap endonuclease 1.